Reading from the N-terminus, the 219-residue chain is Cytidylate kinase (219 aa).

15–23 (GPAASGKGT) serves as a coordination point for ATP.

Belongs to the cytidylate kinase family. Type 1 subfamily.

It is found in the cytoplasm. The catalysed reaction is CMP + ATP = CDP + ADP. It catalyses the reaction dCMP + ATP = dCDP + ADP. This Brucella melitensis biotype 1 (strain ATCC 23456 / CCUG 17765 / NCTC 10094 / 16M) protein is Cytidylate kinase.